Here is a 422-residue protein sequence, read N- to C-terminus: NADP-dependent malic enzyme (422 aa).

Tyrosine 39 functions as the Proton donor in the catalytic mechanism. The active-site Proton acceptor is the lysine 94. Lysine 94 serves as a coordination point for substrate. Positions 136, 137, and 162 each coordinate a divalent metal cation. NADP(+) contacts are provided by residues 195–198 (AGAA), asparagine 286, and asparagine 318. Asparagine 318 lines the substrate pocket.

This sequence belongs to the malic enzymes family. Mg(2+) serves as cofactor. Requires Mn(2+) as cofactor.

It catalyses the reaction (S)-malate + NADP(+) = pyruvate + CO2 + NADPH. The enzyme catalyses oxaloacetate + H(+) = pyruvate + CO2. The sequence is that of NADP-dependent malic enzyme from Halomonas elongata (strain ATCC 33173 / DSM 2581 / NBRC 15536 / NCIMB 2198 / 1H9).